The primary structure comprises 388 residues: Interferon alpha/beta receptor 1b (388 aa).

2 Fibronectin type-III domains span residues 5–102 (LPQP…FCPD) and 109–211 (PPSR…TEGD). Residues 217-237 (IFLYFLVSMMVCFLLVLLSSY) traverse the membrane as a helical segment. A disordered region spans residues 308–357 (TAPPSELEQDSGRHIRQDSGDSGIYSTEGGSAQQGRSGGEPIRRDQEVDS). Basic and acidic residues predominate over residues 317 to 326 (DSGRHIRQDS). Polar residues predominate over residues 331 to 342 (IYSTEGGSAQQG).

The protein belongs to the type II cytokine receptor family. As to quaternary structure, heterodimer with IFNAR2; forming the receptor for type I interferon.

Its subcellular location is the cell membrane. It localises to the cytoplasm. The protein resides in the perinuclear region. In terms of biological role, together with IFNAR2, forms the heterodimeric receptor for type I interferons (including interferons alpha, beta, epsilon, omega and kappa). Type I interferon binding activates the JAK-STAT signaling cascade, resulting in transcriptional activation or repression of interferon-regulated genes that encode the effectors of the interferon response. Mechanistically, type I interferon-binding brings the IFNAR1 and IFNAR2 subunits into close proximity with one another, driving their associated Janus kinases (JAKs) (TYK2 bound to IFNAR1 and JAK1 bound to IFNAR2) to cross-phosphorylate one another. The activated kinases phosphorylate specific tyrosine residues on the intracellular domains of IFNAR1 and IFNAR2, forming docking sites for the STAT transcription factors. STAT proteins are then phosphorylated by the JAKs, promoting their translocation into the nucleus to regulate expression of interferon-regulated genes. This Oncorhynchus mykiss (Rainbow trout) protein is Interferon alpha/beta receptor 1b.